Consider the following 174-residue polypeptide: Protein RESTRICTED TEV MOVEMENT 1 (174 aa).

The Jacalin-type lectin domain maps to 1–152 (MKIGPVGKHD…LQYIGVYLRP (152 aa)).

The protein belongs to the jacalin lectin family. In terms of assembly, self-interacts. Interacts with RTM3. As to expression, expressed at low levels exclusively in phloem-associated cells (e.g. sieve elements and adjacent cells).

It localises to the cytoplasm. Its function is as follows. Required for the restriction of long-distance movement of the pathogenic tobacco etch virus (TEV) without causing a hypersensitive response or inducing systemic acquired resistance. The polypeptide is Protein RESTRICTED TEV MOVEMENT 1 (RTM1) (Arabidopsis thaliana (Mouse-ear cress)).